Reading from the N-terminus, the 178-residue chain is Large ribosomal subunit protein uL6 (178 aa).

This sequence belongs to the universal ribosomal protein uL6 family. Part of the 50S ribosomal subunit.

This protein binds to the 23S rRNA, and is important in its secondary structure. It is located near the subunit interface in the base of the L7/L12 stalk, and near the tRNA binding site of the peptidyltransferase center. The sequence is that of Large ribosomal subunit protein uL6 from Streptococcus pyogenes serotype M3 (strain ATCC BAA-595 / MGAS315).